The primary structure comprises 443 residues: MEEDIDTRKINNSFLRDHSYATEADIISTVEFNHTGELLATGDKGGRVVIFQREQESKNQVHRRGEYNVYSTFQSHEPEFDYLKSLEIEEKINKIRWLPQQNAAYFLLSTNDKTVKLWKVSERDKRPEGYNLKDEEGRLRDPATITTLRVPVLRPMDLMVEATPRRVFANAHTYHINSISVNSDYETYMSADDLRINLWNFEITNQSFNIVDIKPANMEELTEVITAAEFHPHHCNTFVYSSSKGTIRLCDMRASALCDRHTKFFEEPEDPSNRSFFSEIISSISDVKFSHSGRYIMTRDYLTVKVWDLNMENRPIETYQVHDYLRSKLCSLYENDCIFDKFECVWNGSDSVIMTGSYNNFFRMFDRNTKRDVTLEASRENSKPRAILKPRKVCVGGKRRKDEISVDSLDFSKKILHTAWHPSENIIAVAATNNLYIFQDKVN.

WD repeat units lie at residues 22–61 (TEAD…KNQV), 87–128 (EIEE…KRPE), 171–209 (AHTY…QSFN), and 220–260 (ELTE…LCDR). A Phosphoserine modification is found at S275. 3 WD repeats span residues 279 to 317 (EIIS…RPIE), 334 to 375 (ENDC…DVTL), and 410 to 442 (DFSK…QDKV). Y295 carries the phosphotyrosine modification. T298 is modified (phosphothreonine).

The protein belongs to the phosphatase 2A regulatory subunit B family. As to quaternary structure, PP2A consists of a common heterodimeric core enzyme, composed of a 36 kDa catalytic subunit (subunit C) and a 65 kDa constant regulatory subunit (PR65 or subunit A), that associates with a variety of regulatory subunits. Proteins that associate with the core dimer include three families of regulatory subunits B (the R2/B/PR55/B55, R3/B''/PR72/PR130/PR59 and R5/B'/B56 families), the 48 kDa variable regulatory subunit, viral proteins, and cell signaling molecules. Interacts with TOMM22. Interacts with IER5 (via N- and C-terminal regions).

It localises to the cytoplasm. The protein resides in the cytoskeleton. Its subcellular location is the membrane. In terms of biological role, the B regulatory subunit might modulate substrate selectivity and catalytic activity, and might also direct the localization of the catalytic enzyme to a particular subcellular compartment. The chain is Serine/threonine-protein phosphatase 2A 55 kDa regulatory subunit B beta isoform (PPP2R2B) from Bos taurus (Bovine).